The chain runs to 102 residues: Gonadotropin subunit beta-1 (102 aa).

Intrachain disulfides connect cysteine 8/cysteine 51, cysteine 20/cysteine 65, cysteine 31/cysteine 77, cysteine 35/cysteine 79, and cysteine 82/cysteine 89. An N-linked (GlcNAc...) asparagine glycan is attached at asparagine 12.

Belongs to the glycoprotein hormones subunit beta family. As to quaternary structure, heterodimer of an alpha and a beta chain.

Its subcellular location is the secreted. Involved in gametogenesis and steroidogenesis. The protein is Gonadotropin subunit beta-1 (cgba) of Thunnus obesus (Bigeye tuna).